The following is a 1066-amino-acid chain: Thyrotropin-releasing hormone-degrading ectoenzyme (1066 aa).

The segment covering 1-14 (MALDGERGEQEEEK) has biased composition (basic and acidic residues). The segment at 1 to 43 (MALDGERGEQEEEKKKKKKKKKRKKKEEEGAEKSSSPFAATMG) is disordered. Residues 1–81 (MALDGERGEQ…ERHIAVHKRL (81 aa)) are Cytoplasmic-facing. Positions 15-25 (KKKKKKKKRKK) are enriched in basic residues. Thr71 carries the post-translational modification Phosphothreonine; by PKC. Residues 82–102 (VLAFAVSIVALLAVTMLAVLL) traverse the membrane as a helical; Signal-anchor for type II membrane protein segment. Over 103–1066 (SLRFDECGAS…FQWLGKAMRH (964 aa)) the chain is Extracellular. The disordered stretch occupies residues 118–176 (TDGGLGGFPERDSNSSFPGSARRNHHAGGESSQRESGEVGTPGTPSAQPPSEEEREQWQ). N-linked (GlcNAc...) asparagine glycans are attached at residues Asn131, Asn202, Asn217, Asn264, and Asn380. 446-450 (AAMEN) contributes to the substrate binding site. His482 provides a ligand contact to Zn(2+). Catalysis depends on Glu483, which acts as the Proton acceptor. His486 and Glu505 together coordinate Zn(2+). Residues Asn647, Asn676, Asn691, Asn705, Asn726, Asn842, and Asn948 are each glycosylated (N-linked (GlcNAc...) asparagine).

Belongs to the peptidase M1 family. In terms of assembly, homodimer; disulfide-linked. It depends on Zn(2+) as a cofactor.

The protein resides in the membrane. The catalysed reaction is Release of the N-terminal pyroglutamyl group from pGlu-|-His-Xaa tripeptides and pGlu-|-His-Xaa-Gly tetrapeptides.. In terms of biological role, specific inactivation of TRH after its release. The chain is Thyrotropin-releasing hormone-degrading ectoenzyme (Trhde) from Mus musculus (Mouse).